The primary structure comprises 73 residues: Neutrophil elastase 2B (73 aa).

Residues 1 to 73 enclose the Peptidase S1 domain; sequence IVGGRPARPH…SGGPLVCNGL (73 aa). The Charge relay system role is filled by serine 64.

Belongs to the peptidase S1 family. Elastase subfamily.

May be involved in the degradation of connective tissue in chronic lung disease. In Equus caballus (Horse), this protein is Neutrophil elastase 2B.